Reading from the N-terminus, the 529-residue chain is uncharacterized protein (529 aa).

Asp-389 functions as the Nucleophile in the catalytic mechanism. Glu-392 is an active-site residue. The active-site Proton donor is Asp-459.

Belongs to the glycosyl hydrolase 31 family.

This is an uncharacterized protein from Pseudescherichia vulneris (Escherichia vulneris).